The chain runs to 377 residues: Ribosomal RNA large subunit methyltransferase G (377 aa).

It belongs to the methyltransferase superfamily. RlmG family.

It localises to the cytoplasm. The catalysed reaction is guanosine(1835) in 23S rRNA + S-adenosyl-L-methionine = N(2)-methylguanosine(1835) in 23S rRNA + S-adenosyl-L-homocysteine + H(+). Specifically methylates the guanine in position 1835 (m2G1835) of 23S rRNA. The chain is Ribosomal RNA large subunit methyltransferase G from Streptomyces coelicolor (strain ATCC BAA-471 / A3(2) / M145).